Here is a 506-residue protein sequence, read N- to C-terminus: MADVGATGAEIRATRIEKAKTLQAQGMSPYAYRWERTHTAALLQDKYAHLAAGEAVGDRVSVAGRIMARRIFGKLAFFTLQDDSGTIQLYLDKQTISQTMGEAAFADLKHLTDVGDILGAVGTLKRTEKGELSVVVESYTMLTKSLLPLPDKWHGLTDVEKRYRQRYVDLIVNPQVRDTFRKRALITAAIRRYLNEQGFIEIETPVLQVEAGGAEARPFITYHNTLEMQLYLRIATELHLKRLIVGGFEKVYELGRIFRNEGISTKHNPEFTSIEVYQAYADYNDMMTLTEAIITTGAMEVLGTLKITYQGETIDLTPPWRRVTMHDAVLAATGIDFRQLGDLTAAKIAAQKVGVKDLDTCDTIGRVLNEVFEQIVEPTLIQPTFVLDYPVEISPLAKPHRSQPGLVERFELFIVGREHANSFSELTDPLDQRQRLEEQARRKAAGDLAAHSVDEDFLTALEHGMPPTGGLGIGIDRLVMLLTDSPSIRDVIAFPLLRPESAGGQV.

Mg(2+) is bound by residues E411 and E418.

This sequence belongs to the class-II aminoacyl-tRNA synthetase family. As to quaternary structure, homodimer. Requires Mg(2+) as cofactor.

It is found in the cytoplasm. The enzyme catalyses tRNA(Lys) + L-lysine + ATP = L-lysyl-tRNA(Lys) + AMP + diphosphate. The protein is Lysine--tRNA ligase of Thermosynechococcus vestitus (strain NIES-2133 / IAM M-273 / BP-1).